Reading from the N-terminus, the 150-residue chain is Large ribosomal subunit protein bL9 (150 aa).

This sequence belongs to the bacterial ribosomal protein bL9 family.

Functionally, binds to the 23S rRNA. The chain is Large ribosomal subunit protein bL9 from Corynebacterium glutamicum (strain R).